The primary structure comprises 358 residues: MDVVEVATPGGSYPIHIGPGRLDALDASIPADATAIAVVTNPTVAGLYGARVEAALARTGKRVLRIELPDGEAHKDWQTLNLIFDALLENRLDRRAVLVALGGGVIGDMTGFAAAVYMRGIRFVQVPTTLLAQVDSSVGGKTAVNHPLGKNMIGAFYQPVAVEIDTEVLGTLPAREVSAGLAEVIKYGLILDAGFWQWCEDNVGALRALEPRALAYAIRRSCELKAQVVGQDERESGLRAILNLGHTFGHAIESGLGYGEWLHGEAVGCGMVQAAELSTLAAGFPAADVQRVRDLVREIGCPTVAPDLGAERWLALMQVDKKTEGGEIRFVLMPRIGQALSRAAPEADVRTALERTTR.

NAD(+) contacts are provided by residues 70–75 (DGEAHK), 104–108 (GVIGD), 128–129 (TT), lysine 141, and lysine 150. Residues glutamate 183, histidine 246, and histidine 263 each contribute to the Zn(2+) site.

The protein belongs to the sugar phosphate cyclases superfamily. Dehydroquinate synthase family. NAD(+) serves as cofactor. It depends on Co(2+) as a cofactor. Zn(2+) is required as a cofactor.

It is found in the cytoplasm. The catalysed reaction is 7-phospho-2-dehydro-3-deoxy-D-arabino-heptonate = 3-dehydroquinate + phosphate. The protein operates within metabolic intermediate biosynthesis; chorismate biosynthesis; chorismate from D-erythrose 4-phosphate and phosphoenolpyruvate: step 2/7. Catalyzes the conversion of 3-deoxy-D-arabino-heptulosonate 7-phosphate (DAHP) to dehydroquinate (DHQ). The polypeptide is 3-dehydroquinate synthase (Bordetella bronchiseptica (strain ATCC BAA-588 / NCTC 13252 / RB50) (Alcaligenes bronchisepticus)).